The primary structure comprises 182 residues: MKHTSLPEIRSTTVIGVIRNGQAALGSDGQMTLGNTVVKHSTKKIRRLYQGKLLAGFAGATADALTLLDRFEAKLEAFGGKLERASVELARDWRTDKYLRRLEAMIAIVSNDRALIISGTGDVIEPEDGIVAIGSGSMYALAAARSLMKHTSLSAQEIVQESLAIAADICIYTNNHIVVEEL.

Residue threonine 12 is part of the active site. 3 residues coordinate Na(+): alanine 167, cysteine 170, and threonine 173.

This sequence belongs to the peptidase T1B family. HslV subfamily. As to quaternary structure, a double ring-shaped homohexamer of HslV is capped on each side by a ring-shaped HslU homohexamer. The assembly of the HslU/HslV complex is dependent on binding of ATP.

The protein localises to the cytoplasm. It catalyses the reaction ATP-dependent cleavage of peptide bonds with broad specificity.. Its activity is regulated as follows. Allosterically activated by HslU binding. In terms of biological role, protease subunit of a proteasome-like degradation complex believed to be a general protein degrading machinery. In Chlorobium chlorochromatii (strain CaD3), this protein is ATP-dependent protease subunit HslV.